We begin with the raw amino-acid sequence, 320 residues long: Phospho-N-acetylmuramoyl-pentapeptide-transferase (320 aa).

10 helical membrane-spanning segments follow: residues 6–26 (FLTP…LFIG), 54–74 (MGGL…AIWL), 81–101 (LWIA…DDFI), 117–137 (LAGQ…EGFS), 145–165 (IGTI…LVGF), 175–195 (IDGL…IIAF), 200–220 (IDVA…LIFN), 226–246 (IFMG…MSIL), 251–271 (FSLL…MLQV), and 300–320 (RIDI…LLIF).

It belongs to the glycosyltransferase 4 family. MraY subfamily. Mg(2+) serves as cofactor.

It localises to the cell membrane. The catalysed reaction is UDP-N-acetyl-alpha-D-muramoyl-L-alanyl-gamma-D-glutamyl-L-lysyl-D-alanyl-D-alanine + di-trans,octa-cis-undecaprenyl phosphate = Mur2Ac(oyl-L-Ala-gamma-D-Glu-L-Lys-D-Ala-D-Ala)-di-trans,octa-cis-undecaprenyl diphosphate + UMP. The protein operates within cell wall biogenesis; peptidoglycan biosynthesis. In terms of biological role, catalyzes the initial step of the lipid cycle reactions in the biosynthesis of the cell wall peptidoglycan: transfers peptidoglycan precursor phospho-MurNAc-pentapeptide from UDP-MurNAc-pentapeptide onto the lipid carrier undecaprenyl phosphate, yielding undecaprenyl-pyrophosphoryl-MurNAc-pentapeptide, known as lipid I. The chain is Phospho-N-acetylmuramoyl-pentapeptide-transferase from Latilactobacillus sakei subsp. sakei (strain 23K) (Lactobacillus sakei subsp. sakei).